Consider the following 414-residue polypeptide: Esterase FrsA (414 aa).

The protein belongs to the FrsA family.

The enzyme catalyses a carboxylic ester + H2O = an alcohol + a carboxylate + H(+). In terms of biological role, catalyzes the hydrolysis of esters. This is Esterase FrsA from Citrobacter koseri (strain ATCC BAA-895 / CDC 4225-83 / SGSC4696).